The chain runs to 486 residues: NADH-ubiquinone oxidoreductase chain 4 (486 aa).

13 consecutive transmembrane segments (helical) span residues 26 to 46, 76 to 96, 113 to 132, 134 to 156, 165 to 185, 209 to 231, 239 to 259, 271 to 291, 298 to 318, 329 to 349, 372 to 392, 407 to 427, and 452 to 472; these read HFYL…YINF, GLLF…VLLI, LYYT…FWAL, YISF…HIYG, FYVL…IVVI, IIWL…HVWL, PLAG…YAIL, ILYT…TSLA, LKVI…LGVC, IVLG…VGGI, LATY…TGNF, PIIG…QLKL, and FIMN…QIMY.

The protein belongs to the complex I subunit 4 family. In terms of assembly, complex I is composed of 37 different subunits.

It is found in the mitochondrion membrane. It carries out the reaction a ubiquinone + NADH + 5 H(+)(in) = a ubiquinol + NAD(+) + 4 H(+)(out). Its function is as follows. Core subunit of the mitochondrial membrane respiratory chain NADH dehydrogenase (Complex I) that is believed to belong to the minimal assembly required for catalysis. Complex I functions in the transfer of electrons from NADH to the respiratory chain. The immediate electron acceptor for the enzyme is believed to be ubiquinone. In Yarrowia lipolytica (strain CLIB 122 / E 150) (Yeast), this protein is NADH-ubiquinone oxidoreductase chain 4 (ND4).